A 517-amino-acid polypeptide reads, in one-letter code: Salicyloyl-CoA 5-hydroxylase (517 aa).

The protein belongs to the aromatic-ring hydroxylase family. KMO subfamily.

The catalysed reaction is 2-hydroxybenzoyl-CoA + NADH + O2 + H(+) = 2,5-dihydroxybenzoyl-CoA + NAD(+) + H2O. Functionally, involved in the degradation of salicylate via a pathway involving coenzyme A derivative. Catalyzes the aromatic hydroxylation of salicylyl-CoA to yield gentisyl-CoA. In Streptomyces sp, this protein is Salicyloyl-CoA 5-hydroxylase.